The sequence spans 129 residues: MSVLPSHLKYADSHEWVYLDEEGHAVVGITDFAQESLGDLMDVHLPEVGADIDQGEEIMSLESVKAASDIFSPLSGEVVAVNTELEDEPERVNDEPYDGGWLFKLAPHDLSEMDDLLSDVDYQGLIDQS.

The Lipoyl-binding domain maps to H24–A106. K65 carries the post-translational modification N6-lipoyllysine.

This sequence belongs to the GcvH family. In terms of assembly, the glycine cleavage system is composed of four proteins: P, T, L and H. The cofactor is (R)-lipoate.

Its function is as follows. The glycine cleavage system catalyzes the degradation of glycine. The H protein shuttles the methylamine group of glycine from the P protein to the T protein. This Hydrogenovibrio crunogenus (strain DSM 25203 / XCL-2) (Thiomicrospira crunogena) protein is Glycine cleavage system H protein.